The following is a 440-amino-acid chain: Na(+)/H(+) antiporter NhaA (440 aa).

Helical transmembrane passes span 25 to 45 (FLHIEATSGLVLILCTVVALV), 76 to 96 (LHHVINDGLMAVFFFVIGLEV), 112 to 132 (TLPIAAAIGGMIVPATLYLSM), 141 to 161 (GWGIPMATDIAFVVGCLAILG), 170 to 190 (VLLLSLAIVDDIGAILVIAIG), 194 to 214 (SLDGRYLFLAAVAVGAVHFLS), 225 to 245 (VIVGVLAWIALHESGIHATLI), 312 to 332 (HPWTAYVIMPVFALANAGVLI), 345 to 365 (VVIGLVVGKPLGIALFSWLVI), 378 to 398 (WPILMSGSFLAGIGFTMALFI), and 414 to 434 (GVLVGSAISAIAGMGLLLWTL).

It belongs to the NhaA Na(+)/H(+) (TC 2.A.33) antiporter family.

Its subcellular location is the cell inner membrane. The catalysed reaction is Na(+)(in) + 2 H(+)(out) = Na(+)(out) + 2 H(+)(in). Its function is as follows. Na(+)/H(+) antiporter that extrudes sodium in exchange for external protons. The sequence is that of Na(+)/H(+) antiporter NhaA from Rhodopirellula baltica (strain DSM 10527 / NCIMB 13988 / SH1).